A 430-amino-acid chain; its full sequence is Enolase (430 aa).

Glutamine 167 is a (2R)-2-phosphoglycerate binding site. Glutamate 209 serves as the catalytic Proton donor. 3 residues coordinate Mg(2+): aspartate 245, glutamate 286, and aspartate 313. Positions 338, 367, 368, and 389 each coordinate (2R)-2-phosphoglycerate. The Proton acceptor role is filled by lysine 338.

The protein belongs to the enolase family. The cofactor is Mg(2+).

It is found in the cytoplasm. The protein localises to the secreted. The protein resides in the cell surface. It carries out the reaction (2R)-2-phosphoglycerate = phosphoenolpyruvate + H2O. It participates in carbohydrate degradation; glycolysis; pyruvate from D-glyceraldehyde 3-phosphate: step 4/5. Its function is as follows. Catalyzes the reversible conversion of 2-phosphoglycerate (2-PG) into phosphoenolpyruvate (PEP). It is essential for the degradation of carbohydrates via glycolysis. The sequence is that of Enolase from Synechococcus sp. (strain CC9902).